The primary structure comprises 394 residues: MAEKRDYYEVLEVTKESTVEEIKKAYRKKAIQYHPDKNPGDKEAEEKFKEAAEAYDVLSNPDKRARYDQFGHAGMSGAAGNGGPFGGFSGGMSMDDIFSMFGDIFGGHSGGGFGGGFGGFGGFGGGGSQQRKFRGSDLRVKVKLNLKEISTGVEKKFKLKKYIPCSHCHGTGAEGNSGSETCPTCKGSGSVIRNQQTILGTMQTRTTCPTCNGEGKIIKDKCKVCGGEGIEYGEEVVTVKIPAGVAEGMQLSMGGKGNAGKHNGIPGDLLILVEEEPHPELIRDENDLVYNLLLSFPTAAIGGAVEIPTIDGKVKVKIEAGTQPGKVLRLRGKGLPSVNGYGTGDLLVNVSVYVPETLSKEEKSTLEKLEESKNFKPSTSIKEKIFKKFRSLFD.

Residues 6 to 71 (DYYEVLEVTK…DKRARYDQFG (66 aa)) form the J domain. Residues 152–234 (GVEKKFKLKK…CGGEGIEYGE (83 aa)) form a CR-type zinc finger. Zn(2+) contacts are provided by Cys-165, Cys-168, Cys-182, Cys-185, Cys-208, Cys-211, Cys-222, and Cys-225. CXXCXGXG motif repeat units follow at residues 165-172 (CSHCHGTG), 182-189 (CPTCKGSG), 208-215 (CPTCNGEG), and 222-229 (CKVCGGEG).

The protein belongs to the DnaJ family. Homodimer. Requires Zn(2+) as cofactor.

It is found in the cytoplasm. In terms of biological role, participates actively in the response to hyperosmotic and heat shock by preventing the aggregation of stress-denatured proteins and by disaggregating proteins, also in an autonomous, DnaK-independent fashion. Unfolded proteins bind initially to DnaJ; upon interaction with the DnaJ-bound protein, DnaK hydrolyzes its bound ATP, resulting in the formation of a stable complex. GrpE releases ADP from DnaK; ATP binding to DnaK triggers the release of the substrate protein, thus completing the reaction cycle. Several rounds of ATP-dependent interactions between DnaJ, DnaK and GrpE are required for fully efficient folding. Also involved, together with DnaK and GrpE, in the DNA replication of plasmids through activation of initiation proteins. The chain is Chaperone protein DnaJ from Bacteroides fragilis (strain YCH46).